The primary structure comprises 280 residues: Fructose-1,6-bisphosphatase class 1 (280 aa).

Glutamate 64, aspartate 83, leucine 85, and aspartate 86 together coordinate Mg(2+). Substrate contacts are provided by residues 86–89, tyrosine 189, and lysine 220; that span reads DGSS. Glutamate 226 contributes to the Mg(2+) binding site.

Belongs to the FBPase class 1 family. Homotetramer. The cofactor is Mg(2+).

The protein localises to the cytoplasm. It catalyses the reaction beta-D-fructose 1,6-bisphosphate + H2O = beta-D-fructose 6-phosphate + phosphate. Its pathway is carbohydrate biosynthesis; gluconeogenesis. This Campylobacter jejuni subsp. jejuni serotype O:6 (strain 81116 / NCTC 11828) protein is Fructose-1,6-bisphosphatase class 1.